We begin with the raw amino-acid sequence, 430 residues long: Rho GTPase-activating protein 2 (430 aa).

Residues 1-36 are disordered; the sequence is MTGLVMMTKGGGCGGGGKGGRRKSTAEEEEEEEQNQ. Gly residues predominate over residues 9–18; sequence KGGGCGGGGK. In terms of domain architecture, CRIB spans 80-93; sequence IGWPTNVRHITHVT. One can recognise a Rho-GAP domain in the interval 125-310; the sequence is VSAESMQCSY…TLAEREENAT (186 aa). The tract at residues 307–372 is disordered; the sequence is ENATGSEGYS…HLSRHSTHED (66 aa). Low complexity predominate over residues 316–326; sequence SPSHSSNSQTD. Acidic residues predominate over residues 347-356; it reads ECGEEEEVEE. A compositionally biased stretch (basic and acidic residues) spans 357–371; sequence VEQHQEHLSRHSTHE.

As to quaternary structure, homodimerizes via its Rho-GAP domain and forms a tetrameric complex (2:2) with ARAC1/ROP3, ARAC2/ROP7, ARAC4/ROP2, ARAC5/ROP4, ARAC7/ROP9 or ARAC11/ROP1.

In terms of biological role, acts as a GTPase activator for the Rac-type GTPase by converting it to an inactive GDP-bound state. The chain is Rho GTPase-activating protein 2 (ROPGAP2) from Arabidopsis thaliana (Mouse-ear cress).